The chain runs to 482 residues: FAD-linked oxidoreductase alt4 (482 aa).

One can recognise an FAD-binding PCMH-type domain in the interval 53–211; sequence ERPTYLAIVD…LEATFQVYPQ (159 aa).

Belongs to the oxygen-dependent FAD-linked oxidoreductase family. Requires FAD as cofactor.

Its pathway is secondary metabolite biosynthesis. Functionally, FAD-linked oxidoreductase; part of the gene cluster that mediates the biosynthesis of alternapyrone derivatives. Alternapyrone is a decaketide with octa-methylation from methionine on every C2 unit except the third unit. All the domains in the polyketide synthase alt5 are apparently involved in alternapyrone synthesis, that is, the 8 CMeT, 7 KR, 7 DH, and 4 ER reactions in the 9 KS-mediated condensation steps required for alternapyrone synthesis. the alternapyrone produced by alt5 might be intensively modified by cytochrome P450 monooxygenases alt1, alt2 and alt3 and FAD-dependent oxidoreductase alt4 present in the alt gene cluster. This Alternaria solani protein is FAD-linked oxidoreductase alt4.